We begin with the raw amino-acid sequence, 816 residues long: Molybdenum cofactor sulfurase (816 aa).

K273 carries the N6-(pyridoxal phosphate)lysine modification. C427 is an active-site residue. The 166-residue stretch at 647 to 812 folds into the MOSC domain; the sequence is NSDSQSHSCI…IRVGEEIIPN (166 aa).

Belongs to the class-V pyridoxal-phosphate-dependent aminotransferase family. MOCOS subfamily. Pyridoxal 5'-phosphate serves as cofactor. Ubiquitously expressed.

The enzyme catalyses Mo-molybdopterin + L-cysteine + AH2 = thio-Mo-molybdopterin + L-alanine + A + H2O. It participates in cofactor biosynthesis; molybdopterin biosynthesis. In terms of biological role, sulfurates the molybdenum cofactor. Sulfation of molybdenum is essential for xanthine dehydrogenase (XDH) and aldehyde oxidase (ADO) enzymes in which molybdenum cofactor is liganded by 1 oxygen and 1 sulfur atom in active form. The polypeptide is Molybdenum cofactor sulfurase (FLACCA) (Solanum lycopersicum (Tomato)).